The chain runs to 696 residues: MADPTTYRPAPGTIPTEPGVYKFRDENRRVIYVGKAKNLRSRLSNYFQDVTQLHPRTRQMVFAASSVEWTVVSSEVEALQLEYTWIKRFDPRFNVKYRDDKTYPMLAVSTGERFPRAFFFRGPRRKGVRYFGPYSHAWAVRETLDLLTRVFPMRTCSKGVFNRHESLGRPCLLGYIDKCAAPCVGRVSEEEHREIVDGFTSFMAGHTDKVTRKLNADMMAAAEELDFERAARLRDDLEAIDKVMEKQAVVLGDGTDADIIAFATDQLEAAVQVFNIRGGRIRGQRGWVVEKPGDYAGLLVDATTQPEGDAPETDPALPFLMQDFLVQFYGDAVERAETEAKEDAAVIERRGVDKHSFEEAAPVTRASVVPREILVQVAPNEAEQTLKVLEELRGAGVDARVPQRGDKRALMETVERNAKELLKQHKLKRVGDLTARSAALQELQEALDMEQAPLRIECTDISHIQGTDVVASLVVFEDGLPRKSDYRRYRVKEAAGDGHSNDVASIAEITRRRFLRHNQDKLAVPEAEEFDGSTFSDEKVEEMSTDARRFAYPPQIFIVDGGAPQVAAAQEVFDELGIVDVVLIGLAKRLEEIWLPGDPDPVILPRNSQALFLLQQIRDEAHRFAITYHRQQRSKRMRVSELDSIKGLGQSRRTELVKHFGSVAKLKEASVEDISQVKGFGPKLAEAVYEGLHASK.

Residues 16–95 (TEPGVYKFRD…IKRFDPRFNV (80 aa)) form the GIY-YIG domain. The 36-residue stretch at 208–243 (DKVTRKLNADMMAAAEELDFERAARLRDDLEAIDKV) folds into the UVR domain.

The protein belongs to the UvrC family. In terms of assembly, interacts with UvrB in an incision complex.

It localises to the cytoplasm. The UvrABC repair system catalyzes the recognition and processing of DNA lesions. UvrC both incises the 5' and 3' sides of the lesion. The N-terminal half is responsible for the 3' incision and the C-terminal half is responsible for the 5' incision. This Corynebacterium glutamicum (strain ATCC 13032 / DSM 20300 / JCM 1318 / BCRC 11384 / CCUG 27702 / LMG 3730 / NBRC 12168 / NCIMB 10025 / NRRL B-2784 / 534) protein is UvrABC system protein C.